Consider the following 429-residue polypeptide: MNNLKNLRGTVDLLPDNLIKWQNVEKIILELLLRASVKEIRTPILEMTELFMRGIGEGTDVVSKEMYTFLDRGERSCTLRPEGTASVARAIIQNGISSKSLQKLWYMGPMFRYERPQAGRQRQFHQLGVEFIGYDSVRSDIEIIALAWDILEKLGIKELNLEINTLGDFNDRSNFQKAFLKWLEVNKNDLDLDSQNRIVKNPLRIFDTKNAKTKSILEDAPKLFDFLSEKSLKRYINIKEMLKLLKIPFIENFNLVRGLDYYTHTAFEITSGALGSQATVCGGGRYDNLINQMGGTETPAIGFAIGLERLILLAGKDLEESRETDIYIVNKGFQAEILAIDLSRKLRNYDLIIELDLSGASFSKQFKKANKLKSKSIIIIGDDEALKNEFKIRLFNNINVENHEANISFEDDIKLEKWLKTNFLLDKNL.

It belongs to the class-II aminoacyl-tRNA synthetase family. As to quaternary structure, homodimer.

It localises to the cytoplasm. The enzyme catalyses tRNA(His) + L-histidine + ATP = L-histidyl-tRNA(His) + AMP + diphosphate + H(+). The chain is Histidine--tRNA ligase from Prochlorococcus marinus (strain MIT 9515).